Reading from the N-terminus, the 114-residue chain is Iron-sulfur cluster insertion protein ErpA (114 aa).

Iron-sulfur cluster contacts are provided by C42, C106, and C108.

This sequence belongs to the HesB/IscA family. As to quaternary structure, homodimer. Requires iron-sulfur cluster as cofactor.

Required for insertion of 4Fe-4S clusters for at least IspG. This chain is Iron-sulfur cluster insertion protein ErpA, found in Erwinia tasmaniensis (strain DSM 17950 / CFBP 7177 / CIP 109463 / NCPPB 4357 / Et1/99).